The primary structure comprises 387 residues: Mannose-6-phosphate isomerase (387 aa).

This sequence belongs to the N-acylglucosamine 2-epimerase family.

It carries out the reaction D-mannose 6-phosphate = D-fructose 6-phosphate. The protein is Mannose-6-phosphate isomerase (pmi) of Rhizobium meliloti (strain 1021) (Ensifer meliloti).